We begin with the raw amino-acid sequence, 360 residues long: Phospho-N-acetylmuramoyl-pentapeptide-transferase (360 aa).

A run of 10 helical transmembrane segments spans residues alanine 26 to alanine 46, proline 72 to tyrosine 92, serine 94 to valine 114, tryptophan 132 to glycine 152, valine 168 to glycine 188, glycine 199 to threonine 219, alanine 236 to phenylalanine 256, valine 263 to leucine 283, phenylalanine 288 to valine 308, and valine 338 to lysine 358.

This sequence belongs to the glycosyltransferase 4 family. MraY subfamily. Mg(2+) is required as a cofactor.

Its subcellular location is the cell inner membrane. It carries out the reaction UDP-N-acetyl-alpha-D-muramoyl-L-alanyl-gamma-D-glutamyl-meso-2,6-diaminopimeloyl-D-alanyl-D-alanine + di-trans,octa-cis-undecaprenyl phosphate = di-trans,octa-cis-undecaprenyl diphospho-N-acetyl-alpha-D-muramoyl-L-alanyl-D-glutamyl-meso-2,6-diaminopimeloyl-D-alanyl-D-alanine + UMP. The protein operates within cell wall biogenesis; peptidoglycan biosynthesis. Its function is as follows. Catalyzes the initial step of the lipid cycle reactions in the biosynthesis of the cell wall peptidoglycan: transfers peptidoglycan precursor phospho-MurNAc-pentapeptide from UDP-MurNAc-pentapeptide onto the lipid carrier undecaprenyl phosphate, yielding undecaprenyl-pyrophosphoryl-MurNAc-pentapeptide, known as lipid I. The chain is Phospho-N-acetylmuramoyl-pentapeptide-transferase from Citrobacter koseri (strain ATCC BAA-895 / CDC 4225-83 / SGSC4696).